A 188-amino-acid chain; its full sequence is Large ribosomal subunit protein eL18 (188 aa).

Residue Lys119 forms a Glycyl lysine isopeptide (Lys-Gly) (interchain with G-Cter in SUMO2) linkage. The residue at position 130 (Ser130) is a Phosphoserine. Residues Arg150–Asn188 form a disordered region. Thr158 is subject to Phosphothreonine. Composition is skewed to basic residues over residues Ser161–Gly171 and Arg178–Asn188. A Glycyl lysine isopeptide (Lys-Gly) (interchain with G-Cter in SUMO2) cross-link involves residue Lys164.

This sequence belongs to the eukaryotic ribosomal protein eL18 family. As to quaternary structure, component of the large ribosomal subunit.

The protein localises to the cytoplasm. The protein resides in the cytosol. It localises to the rough endoplasmic reticulum. In terms of biological role, component of the large ribosomal subunit. The ribosome is a large ribonucleoprotein complex responsible for the synthesis of proteins in the cell. This chain is Large ribosomal subunit protein eL18 (Rpl18), found in Mus musculus (Mouse).